Reading from the N-terminus, the 354-residue chain is Glycerol-3-phosphate dehydrogenase [NAD(+)], glycosomal (354 aa).

NAD(+) contacts are provided by residues 15-20, Phe-90, Lys-118, and Ala-150; that span reads GSGAFG. Residue Lys-118 participates in substrate binding. The active-site Proton acceptor is Lys-203. NAD(+) contacts are provided by Arg-267 and Glu-293. 267–268 serves as a coordination point for substrate; it reads RN. A Microbody targeting signal motif is present at residues 352–354; sequence SKM.

It belongs to the NAD-dependent glycerol-3-phosphate dehydrogenase family.

It is found in the glycosome. The enzyme catalyses sn-glycerol 3-phosphate + NAD(+) = dihydroxyacetone phosphate + NADH + H(+). The protein is Glycerol-3-phosphate dehydrogenase [NAD(+)], glycosomal (GPD) of Trypanosoma brucei rhodesiense.